The sequence spans 258 residues: UBX domain-containing protein 2A (258 aa).

The interval 1–152 is required for interaction with CHRNA3; the sequence is MKEVDNLDSI…SATPRIVSKA (152 aa). Residues 1–165 are required for inhibition of CHRNA3 ubiquitination and translocation of CHRNA3 to the plasma membrane resulting in an increase in acetylcholine-gated nicotinic acetylcholine receptor currents; it reads MKEVDNLDSI…EVDNKSTLSA (165 aa). Residues 61 to 125 enclose the SEP domain; that stretch reads QVDVNIKLWK…VEDKKNEVCM (65 aa). Positions 168–258 are required for interaction with VCP; the sequence is LNNLEPITRI…QKTAEPFRKL (91 aa). A UBX domain is found at 170-247; sequence NLEPITRIQI…DLQNAVIIQR (78 aa).

In terms of assembly, part of a complex composed of STUB1/CHIP, VCP/p97, CHRNA3, and UBXN2A that modulates the ubiquitination and endoplasmic reticulum-associated degradation (ERAD) of CHRNA3. Within the complex UBXN2A acts as a scaffold protein required for the interaction of CHRNA3 with VCP/p97, this interaction also inhibits CHRNA3 ubiquitination by STUB1/CHIP and subsequently ERAD. Interacts (via SEP domain) with CHRNA3 and interacts (via UBX domain) with VCP/P97; these interactions are required for the interaction of CHRNA3 with the STUB1-VCP-UBXN2A complex. Interacts with HSPA9/MOT-2 (via SBD domain); the interaction inhibits HSPA9/MOT-2 interaction with and degradation of p53, thereby promotes p53 translocation to the nucleus. Interacts with RICTOR. Ubiquitinated.

It is found in the golgi apparatus. Its subcellular location is the endoplasmic reticulum. The protein resides in the perikaryon. The protein localises to the cell projection. It localises to the dendrite. It is found in the nucleus. Its subcellular location is the cytoplasm. Acts to repress the ubiquitination and subsequent endoplasmic reticulum-associated degradation of CHRNA3 by the STUB1-VCP-UBXN2A complex in cortical neurons. Also acts to promote the translocation of CHRNA3 to the plasma membrane and subsequently increases plasma membrane acetylcholine-gated ion-channel activation. Plays a role in the inhibition of STUB1-mediated TP53 degradation, via its interaction with HSPA9 which acts to inhibit TP53 binding to HSPA9. Positively mediates the ubiquitination and proteosomal degradation of RICTOR, may thereby act as a negative regulator of the mTORC2 pathway. The polypeptide is UBX domain-containing protein 2A (Rattus norvegicus (Rat)).